Reading from the N-terminus, the 319-residue chain is HPr kinase/phosphorylase (319 aa).

Residues His146 and Lys167 contribute to the active site. 161–168 contributes to the ATP binding site; the sequence is GESGLGKS. Position 168 (Ser168) interacts with Mg(2+). Asp185 functions as the Proton acceptor; for phosphorylation activity. Proton donor; for dephosphorylation activity in the catalytic mechanism. The tract at residues 209–218 is important for the catalytic mechanism of both phosphorylation and dephosphorylation; it reads LEVRGIGLLD. Glu210 lines the Mg(2+) pocket. Residue Arg252 is part of the active site. An important for the catalytic mechanism of dephosphorylation region spans residues 273–278; the sequence is QVVAGR.

Belongs to the HPrK/P family. In terms of assembly, homohexamer. Requires Mg(2+) as cofactor.

The enzyme catalyses [HPr protein]-L-serine + ATP = [HPr protein]-O-phospho-L-serine + ADP + H(+). The catalysed reaction is [HPr protein]-O-phospho-L-serine + phosphate + H(+) = [HPr protein]-L-serine + diphosphate. Catalyzes the ATP- as well as the pyrophosphate-dependent phosphorylation of a specific serine residue in HPr, a phosphocarrier protein of the phosphoenolpyruvate-dependent sugar phosphotransferase system (PTS). HprK/P also catalyzes the pyrophosphate-producing, inorganic phosphate-dependent dephosphorylation (phosphorolysis) of seryl-phosphorylated HPr (P-Ser-HPr). This is HPr kinase/phosphorylase from Variovorax paradoxus (strain S110).